Reading from the N-terminus, the 172-residue chain is Adenine phosphoribosyltransferase (172 aa).

Belongs to the purine/pyrimidine phosphoribosyltransferase family. As to quaternary structure, homodimer.

The protein resides in the cytoplasm. It catalyses the reaction AMP + diphosphate = 5-phospho-alpha-D-ribose 1-diphosphate + adenine. It functions in the pathway purine metabolism; AMP biosynthesis via salvage pathway; AMP from adenine: step 1/1. Catalyzes a salvage reaction resulting in the formation of AMP, that is energically less costly than de novo synthesis. This Streptococcus agalactiae serotype III (strain NEM316) protein is Adenine phosphoribosyltransferase.